The following is a 108-amino-acid chain: uncharacterized protein (108 aa).

Phosphothreonine is present on Thr56. Residues 89–108 (AQAKGTEQAEALKKGTSKWF) are disordered.

The protein localises to the cytoplasm. This is an uncharacterized protein from Schizosaccharomyces pombe (strain 972 / ATCC 24843) (Fission yeast).